The chain runs to 390 residues: MTTYLFTSESVSEGHPDKIADQISDAVLDAILEQDPKARVACETYVKTGMVMVGGEITTSAWVDIEEITRQTVREIGYVNSEMGFDANSCAVLSAIGKQSPDINQGVDREDPLQQGAGDQGLMFGYATNETDVLMPAPITYAHRLVQRQAEVRKNGVLPWLRPDAKSQVTFQYNNDKIVGVDAVVLSTQHAENISQKDLQEAVMEEIIKPVLPAEWLNPTTKYFINPTGRFVIGGPMGDCGLTGRKIIVDTYGGMARHGGGAFSGKDPSKVDRSAAYAARYVAKNIVAAGLADRCEIQVSYAIGVAEPTSIMVETFGTEKVSTATLTLLVREFFDLRPHGLIQMLDLLHPIYRDTAAYGHFGRPQFPWEATDKAEALRDAAGLKLSAMNM.

ATP is bound at residue H15. D17 contributes to the Mg(2+) binding site. E43 contacts K(+). Positions 56 and 99 each coordinate L-methionine. Positions 99–109 (QSPDINQGVDR) are flexible loop. Residues 164-166 (DAK), 230-231 (RF), D239, 245-246 (RK), A262, and K266 contribute to the ATP site. Residue D239 participates in L-methionine binding. K270 provides a ligand contact to L-methionine.

Belongs to the AdoMet synthase family. In terms of assembly, homotetramer; dimer of dimers. Mg(2+) is required as a cofactor. K(+) serves as cofactor.

Its subcellular location is the cytoplasm. It carries out the reaction L-methionine + ATP + H2O = S-adenosyl-L-methionine + phosphate + diphosphate. It participates in amino-acid biosynthesis; S-adenosyl-L-methionine biosynthesis; S-adenosyl-L-methionine from L-methionine: step 1/1. Its function is as follows. Catalyzes the formation of S-adenosylmethionine (AdoMet) from methionine and ATP. The overall synthetic reaction is composed of two sequential steps, AdoMet formation and the subsequent tripolyphosphate hydrolysis which occurs prior to release of AdoMet from the enzyme. This is S-adenosylmethionine synthase from Photorhabdus laumondii subsp. laumondii (strain DSM 15139 / CIP 105565 / TT01) (Photorhabdus luminescens subsp. laumondii).